We begin with the raw amino-acid sequence, 414 residues long: Light-independent protochlorophyllide reductase subunit N (414 aa).

Residues C16, C41, and C98 each contribute to the [4Fe-4S] cluster site.

Belongs to the BchN/ChlN family. As to quaternary structure, protochlorophyllide reductase is composed of three subunits; BchL, BchN and BchB. Forms a heterotetramer of two BchB and two BchN subunits. The cofactor is [4Fe-4S] cluster.

It catalyses the reaction chlorophyllide a + oxidized 2[4Fe-4S]-[ferredoxin] + 2 ADP + 2 phosphate = protochlorophyllide a + reduced 2[4Fe-4S]-[ferredoxin] + 2 ATP + 2 H2O. The protein operates within porphyrin-containing compound metabolism; bacteriochlorophyll biosynthesis (light-independent). In terms of biological role, component of the dark-operative protochlorophyllide reductase (DPOR) that uses Mg-ATP and reduced ferredoxin to reduce ring D of protochlorophyllide (Pchlide) to form chlorophyllide a (Chlide). This reaction is light-independent. The NB-protein (BchN-BchB) is the catalytic component of the complex. The polypeptide is Light-independent protochlorophyllide reductase subunit N (Roseiflexus castenholzii (strain DSM 13941 / HLO8)).